The sequence spans 220 residues: Thymidylate kinase (220 aa).

G10–S17 serves as a coordination point for ATP.

This sequence belongs to the thymidylate kinase family.

It catalyses the reaction dTMP + ATP = dTDP + ADP. Phosphorylation of dTMP to form dTDP in both de novo and salvage pathways of dTTP synthesis. The protein is Thymidylate kinase of Prochlorococcus marinus (strain SARG / CCMP1375 / SS120).